We begin with the raw amino-acid sequence, 240 residues long: ATP-dependent dethiobiotin synthetase BioD (240 aa).

15–20 (EIGKTF) provides a ligand contact to ATP. T19 provides a ligand contact to Mg(2+). The active site involves K40. ATP contacts are provided by residues D57, 118-121 (EGVG), and 178-179 (NR). Mg(2+)-binding residues include D57 and E118.

The protein belongs to the dethiobiotin synthetase family. In terms of assembly, homodimer. The cofactor is Mg(2+).

It is found in the cytoplasm. It catalyses the reaction (7R,8S)-7,8-diammoniononanoate + CO2 + ATP = (4R,5S)-dethiobiotin + ADP + phosphate + 3 H(+). It participates in cofactor biosynthesis; biotin biosynthesis; biotin from 7,8-diaminononanoate: step 1/2. Catalyzes a mechanistically unusual reaction, the ATP-dependent insertion of CO2 between the N7 and N8 nitrogen atoms of 7,8-diaminopelargonic acid (DAPA, also called 7,8-diammoniononanoate) to form a ureido ring. In Burkholderia mallei (strain NCTC 10247), this protein is ATP-dependent dethiobiotin synthetase BioD.